Consider the following 156-residue polypeptide: Single-stranded DNA-binding protein 1 (156 aa).

The SSB domain maps to 1-107; it reads MNETMICAVG…IDAVAIGHDL (107 aa). Low complexity predominate over residues 114–124; sequence FRRTARTEAST. A disordered region spans residues 114–156; it reads FRRTARTEASTSPPRPEPNWEVPAGGTPGEPVPEQRPDPVPVG.

As to quaternary structure, homotetramer.

The polypeptide is Single-stranded DNA-binding protein 1 (ssb1) (Streptomyces coelicolor (strain ATCC BAA-471 / A3(2) / M145)).